The following is a 208-amino-acid chain: Putative speedy protein E7 (208 aa).

This sequence belongs to the Speedy/Ringo family.

In Homo sapiens (Human), this protein is Putative speedy protein E7 (SPDYE7P).